The primary structure comprises 532 residues: CTP synthase (532 aa).

The interval 1–269 (MNQASTRFIF…DTQILNHFNI (269 aa)) is amidoligase domain. Position 17 (S17) interacts with CTP. Residue S17 coordinates UTP. ATP is bound by residues 18 to 23 (SLGKGL) and D75. Mg(2+) contacts are provided by D75 and E143. Residues 150–152 (DIE), 190–195 (KTKPTQ), and K226 each bind CTP. UTP is bound by residues 190–195 (KTKPTQ) and K226. Residues 294-532 (NVAIIGKYIK…FISFIKASLD (239 aa)) form the Glutamine amidotransferase type-1 domain. An L-glutamine-binding site is contributed by G355. C382 functions as the Nucleophile; for glutamine hydrolysis in the catalytic mechanism. L-glutamine contacts are provided by residues 383-386 (MGMQ), E406, and R462. Catalysis depends on residues H509 and E511.

The protein belongs to the CTP synthase family. As to quaternary structure, homotetramer.

It carries out the reaction UTP + L-glutamine + ATP + H2O = CTP + L-glutamate + ADP + phosphate + 2 H(+). It catalyses the reaction L-glutamine + H2O = L-glutamate + NH4(+). The enzyme catalyses UTP + NH4(+) + ATP = CTP + ADP + phosphate + 2 H(+). The protein operates within pyrimidine metabolism; CTP biosynthesis via de novo pathway; CTP from UDP: step 2/2. Allosterically activated by GTP, when glutamine is the substrate; GTP has no effect on the reaction when ammonia is the substrate. The allosteric effector GTP functions by stabilizing the protein conformation that binds the tetrahedral intermediate(s) formed during glutamine hydrolysis. Inhibited by the product CTP, via allosteric rather than competitive inhibition. Catalyzes the ATP-dependent amination of UTP to CTP with either L-glutamine or ammonia as the source of nitrogen. Regulates intracellular CTP levels through interactions with the four ribonucleotide triphosphates. The polypeptide is CTP synthase (Ehrlichia chaffeensis (strain ATCC CRL-10679 / Arkansas)).